The sequence spans 170 residues: VIP peptides (170 aa).

The first 21 residues, 1–21 (MEARSKPQFLAFLILFSVLFS), serve as a signal peptide directing secretion. A propeptide spanning residues 22–79 (QSLAWPLFGPPSVVRLDDRMPFEGAGDPDQVSLKADSDILQNPLAENGTPYYDVSRNA) is cleaved from the precursor. Ser-76 carries the phosphoserine modification. Ile-107 carries the post-translational modification Isoleucine amide. Asn-133 carries an N-linked (GlcNAc...) asparagine glycan. Asn-152 is subject to Asparagine amide. The propeptide occupies 156–170 (SSEGDSADFLEELEK).

Belongs to the glucagon family.

It is found in the secreted. VIP is a neuropeptide involved in a diverse array of physiological processes through activating the PACAP subfamily of class B1 G protein-coupled receptors: VIP receptor 1 (VPR1) and VIP receptor 2 (VPR2). Abundantly expressed throughout the CNS and peripheral nervous systems where they primarily exert neuroprotective and immune modulatory roles. Also causes vasodilation, lowers arterial blood pressure, stimulates myocardial contractility, increases glycogenolysis and relaxes the smooth muscle of trachea, stomach and gall bladder. In terms of biological role, PHM-27 and PHV-42 are two bioactive forms from proteolysis of the same precursor protein, that cause vasodilation. PHM-27 is a potent agonist of the calcitonin receptor CALCR, with similar efficacy as calcitonin. The polypeptide is VIP peptides (Vip) (Mus musculus (Mouse)).